The primary structure comprises 290 residues: uncharacterized protein (290 aa).

The next 7 membrane-spanning stretches (helical) occupy residues 40 to 60 (MHVILLSALFYQIINILSPVI), 80 to 100 (DAHVVSSVQSIVLICLGYTCL), 110 to 130 (LFGYSVVAGDIYALTAGYFVW), 139 to 159 (VHITGIGFVIHAIAALFVITF), 166 to 188 (MYYGPTYLSWELSTPFLNIHYFL), 200 to 220 (MINGFILIVTFICVRIAWGWF), and 238 to 260 (WALSLFYLAANMSLNCLNLFWVS). In terms of domain architecture, TLC spans 74 to 271 (KTRLNWDAHV…MIDAIRRRAH (198 aa)).

It localises to the endoplasmic reticulum membrane. This is an uncharacterized protein from Schizosaccharomyces pombe (strain 972 / ATCC 24843) (Fission yeast).